The primary structure comprises 356 residues: Glutamine synthetase (356 aa).

Residues 19 to 99 (IIAEYIWIGG…VMCDCYTPRG (81 aa)) form the GS beta-grasp domain. Positions 106-356 (KRYNAAKILS…IAQTTILWKP (251 aa)) constitute a GS catalytic domain.

Belongs to the glutamine synthetase family. As to quaternary structure, homooctamer.

It is found in the cytoplasm. It catalyses the reaction L-glutamate + NH4(+) + ATP = L-glutamine + ADP + phosphate + H(+). This Hordeum vulgare (Barley) protein is Glutamine synthetase.